Here is a 235-residue protein sequence, read N- to C-terminus: Orotidine 5'-phosphate decarboxylase (235 aa).

Residues Asp17, Lys39, 66–75, Thr121, Arg182, Gln191, Gly211, and Arg212 contribute to the substrate site; that span reads DLKLHDIGNT. Residue Lys68 is the Proton donor of the active site.

The protein belongs to the OMP decarboxylase family. Type 1 subfamily. As to quaternary structure, homodimer.

It catalyses the reaction orotidine 5'-phosphate + H(+) = UMP + CO2. It functions in the pathway pyrimidine metabolism; UMP biosynthesis via de novo pathway; UMP from orotate: step 2/2. Its function is as follows. Catalyzes the decarboxylation of orotidine 5'-monophosphate (OMP) to uridine 5'-monophosphate (UMP). This chain is Orotidine 5'-phosphate decarboxylase, found in Afipia carboxidovorans (strain ATCC 49405 / DSM 1227 / KCTC 32145 / OM5) (Oligotropha carboxidovorans).